A 204-amino-acid chain; its full sequence is Urease accessory protein UreG 1 (204 aa).

14-21 (GPVGSGKT) is a GTP binding site.

The protein belongs to the SIMIBI class G3E GTPase family. UreG subfamily. Homodimer. UreD, UreF and UreG form a complex that acts as a GTP-hydrolysis-dependent molecular chaperone, activating the urease apoprotein by helping to assemble the nickel containing metallocenter of UreC. The UreE protein probably delivers the nickel.

It is found in the cytoplasm. Its function is as follows. Facilitates the functional incorporation of the urease nickel metallocenter. This process requires GTP hydrolysis, probably effectuated by UreG. This is Urease accessory protein UreG 1 from Methylorubrum extorquens (strain PA1) (Methylobacterium extorquens).